The primary structure comprises 88 residues: MAEAEKTVRTLTGRVVSDKMDKTITVLIERRVKHPIYGKYVKRSTKLHAHDEANQCKIGDKVSIRETRPLAKTKSWALVEVLERAVEV.

Belongs to the universal ribosomal protein uS17 family. In terms of assembly, part of the 30S ribosomal subunit.

One of the primary rRNA binding proteins, it binds specifically to the 5'-end of 16S ribosomal RNA. The polypeptide is Small ribosomal subunit protein uS17 (Pseudomonas putida (strain ATCC 700007 / DSM 6899 / JCM 31910 / BCRC 17059 / LMG 24140 / F1)).